The sequence spans 409 residues: DNA primase small subunit (409 aa).

Active-site residues include E46, D111, and D113. The Zinc knuckle motif signature appears at 123 to 133 (CCSGAQVCSKC).

This sequence belongs to the eukaryotic-type primase small subunit family. As to quaternary structure, DNA polymerase alpha:primase is a four subunit enzyme complex, which is assembled throughout the cell cycle, and consists of the two DNA polymerase subunits A POL1 and B POL12, and the DNA primase large PRI2 and small PRI1 subunits.

Its function is as follows. DNA primase is the polymerase that synthesizes small RNA primers for the Okazaki fragments made during discontinuous DNA replication. In a complex with DNA polymerase alpha (DNA polymerase alpha:primase) constitutes a replicative polymerase. Both primase components participate in formation of the active center, but the ATP-binding site is exclusively located on p48. In Saccharomyces cerevisiae (strain ATCC 204508 / S288c) (Baker's yeast), this protein is DNA primase small subunit (PRI1).